We begin with the raw amino-acid sequence, 431 residues long: Acyl transferase 8 (431 aa).

The Proton acceptor role is filled by H169. 3 disordered regions span residues 220–247 (VADARGGVRPGVPRPRVLRHERAPRAPA), 260–313 (HHAG…DHLR), and 331–400 (GLRV…PPPT). Residues 224-234 (RGGVRPGVPRP) are compositionally biased toward low complexity. Over residues 264–273 (DGGGGGGGGR) the composition is skewed to gly residues. 2 stretches are compositionally biased toward basic residues: residues 297 to 306 (ERRRRRRRGR) and 335 to 380 (GRPR…RRLP). Residues 381 to 394 (QRHDAPRLITERAH) show a composition bias toward basic and acidic residues.

The protein belongs to the plant acyltransferase family.

Its function is as follows. Involved in the incorporation of ferulate into the cell wall. May act as arabinoxylan feruloyl transferase. This Oryza sativa subsp. japonica (Rice) protein is Acyl transferase 8.